Here is a 605-residue protein sequence, read N- to C-terminus: MKTILSSSLVVSMAAALPHYIRSSGIEASLLTDPKAVAGRTVDYIIAGGGLTGLTTAARLTENPNITVLVIESGFYESDRGPLVEDLNAYGEIFGSEVDHAYQTVELATNNLTELIRSGNGLGGSTLVNGGTWTRPHKVQVDSWETVFGNEGWNWENVAAYSLEAERARAPNAKQVAAGHYFDPSCHGTNGTVHVGPRDTGDDYTPIIDALMTTVENMGVPTKKDLGCGDPHGVSMFPNTLHEDQVRSDAAREWLLPNYQRPNLQVLTGQLVGKVLLDQNNTVPKAVGVEFGTHKANTFNVYAKHEVLLAAGSAVSPQILEHSGIGMKSVLDTVGIDTVVDLPVGLNLQDQTTVPVSSRITSAGAGQGQAAYFATFNETFGDYAPQAHALLNSKLEQWAEEAVARGGFHNATALRIQYENYRDWLVNHNVAYSELFLDTAGAVSFTIWDLIPFTRGYVHITDADPYLRLFAYDPQYFLNELDLYGQAAASQLARNLSNTDAMQTYFAGETTPGDNLAYDASLSDWAEYIKYNFRPNYHGVGTCSMMKKELGGVVDSSARVYGVDSLRVIDGSIPPTQVSSHVMTVFYAMALKISDAILADYASSQ.

The N-terminal stretch at 1 to 16 (MKTILSSSLVVSMAAA) is a signal peptide. Leu-51 and Thr-52 together coordinate FAD. An N-linked (GlcNAc...) asparagine glycan is attached at Asn-65. Position 72 (Glu-72) interacts with FAD. Asn-111 carries N-linked (GlcNAc...) asparagine glycosylation. Positions 125, 129, 130, and 132 each coordinate FAD. The cysteines at positions 186 and 228 are disulfide-linked. The N-linked (GlcNAc...) asparagine glycan is linked to Asn-190. Residue Val-272 coordinates FAD. 4 N-linked (GlcNAc...) asparagine glycosylation sites follow: Asn-280, Asn-377, Asn-410, and Asn-495. The active-site Proton acceptor is the His-538. O2-binding residues include Arg-559 and Val-560. FAD is bound by residues Gly-571 and Met-583.

Belongs to the GMC oxidoreductase family. In terms of assembly, homodimer. The cofactor is FAD.

Its subcellular location is the secreted. The protein resides in the cell wall. It is found in the cytoplasm. The protein localises to the extracellular space. It localises to the extracellular matrix. The catalysed reaction is beta-D-glucose + O2 = D-glucono-1,5-lactone + H2O2. Glucose oxidase catalyzes the oxidation of beta-D-glucose to D-glucono-delta-lactone and hydrogen peroxide in the presence of molecular oxygen. Acts as a critical factor modulating pathogenicity by controlling transcription of genes important for fungal secondary metabolism and infection such as those coding for enzymes involved in degradation of the host cell wall. The protein is Glucose oxidase of Aspergillus carbonarius (strain ITEM 5010).